Here is a 380-residue protein sequence, read N- to C-terminus: Selenoprotein P (380 aa).

Positions 1–19 (MWRSLGLALALCLLPYGGA) are cleaved as a signal peptide. A non-standard amino acid (selenocysteine) is located at residue U59. N-linked (GlcNAc...) asparagine glycans are attached at residues N83, N176, and N195. Residues 196 to 257 (KTAEPSEAHS…RGQHRQGHLE (62 aa)) form a disordered region. Positions 221 to 237 (SKPSENQQPGPSETTLP) are enriched in polar residues. A compositionally biased stretch (basic residues) spans 241 to 253 (LHHHHRHRGQHRQ). A non-standard amino acid (selenocysteine) is located at residue U259. S264 is subject to Phosphoserine. Residues U277, U318, U330, and U352 are each a non-standard amino acid (selenocysteine). A disordered region spans residues 346–380 (RSPPAAUQNQPMNPMEANPNUSUDNQTRKUKUHSN). Residues 348 to 360 (PPAAUQNQPMNPM) show a composition bias toward low complexity. N-linked (GlcNAc...) asparagine glycosylation is present at N365. Residues U366 and U368 are each a non-standard amino acid (selenocysteine). N370 carries N-linked (GlcNAc...) asparagine glycosylation. 2 non-standard amino acids (selenocysteine) are found at residues U375 and U377.

The protein belongs to the selenoprotein P family. Post-translationally, phosphorylation sites are present in the extracellular medium. In terms of tissue distribution, in the kidney, expressed in the cortex with no expression observed in the medulla (at protein level). Expressed by the liver and secreted in plasma.

It is found in the secreted. Functionally, might be responsible for some of the extracellular antioxidant defense properties of selenium or might be involved in the transport of selenium. May supply selenium to tissues such as brain and testis. This chain is Selenoprotein P, found in Mus musculus (Mouse).